The sequence spans 76 residues: Omega-conotoxin-like TxO3 (76 aa).

The N-terminal stretch at 1–22 (MKLTCVVIVAVLFLTAWTFVTA) is a signal peptide. A propeptide spanning residues 23 to 52 (VPHSSNALENLYLKAHHEMNNPEASELNKR) is cleaved from the precursor. Intrachain disulfides connect Cys53/Cys67, Cys60/Cys71, and Cys66/Cys75.

Belongs to the conotoxin O1 superfamily. Expressed by the venom duct.

Its subcellular location is the secreted. Omega-conotoxins act at presynaptic membranes, they bind and block voltage-gated calcium channels (Cav). The protein is Omega-conotoxin-like TxO3 (TXO3) of Conus textile (Cloth-of-gold cone).